Here is a 185-residue protein sequence, read N- to C-terminus: Thymidine kinase (185 aa).

ATP contacts are provided by residues 7–14 (GPMFAGKT) and 83–86 (DEIQ). Residue E84 is the Proton acceptor of the active site. 4 residues coordinate Zn(2+): C139, C142, C177, and H180.

The protein belongs to the thymidine kinase family. Homotetramer.

The protein localises to the cytoplasm. The catalysed reaction is thymidine + ATP = dTMP + ADP + H(+). The sequence is that of Thymidine kinase from Pyrobaculum aerophilum (strain ATCC 51768 / DSM 7523 / JCM 9630 / CIP 104966 / NBRC 100827 / IM2).